A 234-amino-acid chain; its full sequence is Ribitol-5-phosphate cytidylyltransferase (234 aa).

Residues 7–10 (LAGG) and 79–85 (GSIVQKS) each bind CTP.

The protein belongs to the IspD/TarI cytidylyltransferase family. TarI subfamily.

It catalyses the reaction D-ribitol 5-phosphate + CTP + H(+) = CDP-L-ribitol + diphosphate. Its pathway is cell wall biogenesis; poly(ribitol phosphate) teichoic acid biosynthesis. Catalyzes the transfer of the cytidylyl group of CTP to D-ribitol 5-phosphate. The sequence is that of Ribitol-5-phosphate cytidylyltransferase from Lacticaseibacillus paracasei (strain ATCC 334 / BCRC 17002 / CCUG 31169 / CIP 107868 / KCTC 3260 / NRRL B-441) (Lactobacillus paracasei).